The chain runs to 462 residues: Trigger factor (462 aa).

The PPIase FKBP-type domain maps to 163 to 248; the sequence is GDEVLFDFKG…LKEVRRVNSL (86 aa). The interval 442-462 is disordered; that stretch reads SMQEKQTQEPAEEKVETKEEK. Residues 452 to 462 show a composition bias toward basic and acidic residues; that stretch reads AEEKVETKEEK.

It belongs to the FKBP-type PPIase family. Tig subfamily.

Its subcellular location is the cytoplasm. The catalysed reaction is [protein]-peptidylproline (omega=180) = [protein]-peptidylproline (omega=0). Functionally, involved in protein export. Acts as a chaperone by maintaining the newly synthesized protein in an open conformation. Functions as a peptidyl-prolyl cis-trans isomerase. This chain is Trigger factor, found in Mycoplasmopsis synoviae (strain 53) (Mycoplasma synoviae).